The sequence spans 322 residues: Malate dehydrogenase (322 aa).

NAD(+) is bound by residues 10–15 and aspartate 34; that span reads GSGQIG. Residues arginine 83 and arginine 89 each coordinate substrate. Residues asparagine 96 and 119 to 121 contribute to the NAD(+) site; that span reads ITN. Substrate-binding residues include asparagine 121 and arginine 152. Histidine 176 acts as the Proton acceptor in catalysis.

The protein belongs to the LDH/MDH superfamily. MDH type 3 family.

The enzyme catalyses (S)-malate + NAD(+) = oxaloacetate + NADH + H(+). Its function is as follows. Catalyzes the reversible oxidation of malate to oxaloacetate. The polypeptide is Malate dehydrogenase (Bradyrhizobium diazoefficiens (strain JCM 10833 / BCRC 13528 / IAM 13628 / NBRC 14792 / USDA 110)).